The chain runs to 138 residues: Phospholipase A2 homolog crotoxin acid subunit CA (138 aa).

Positions 1-37 (MRALWIVAVLLVGVEGSLVEFETLMMKIAGRSGISYY) are cleaved as a signal peptide. 8 cysteine pairs are disulfide-bonded: cysteine 42–cysteine 131, cysteine 44–cysteine 60, cysteine 59–cysteine 111, cysteine 65–cysteine 138, cysteine 66–cysteine 104, cysteine 73–cysteine 97, cysteine 91–cysteine 102, and cysteine 131–cysteine 138. Residues 79 to 82 (VYTY) constitute a propeptide that is removed on maturation. Glutamine 84 is subject to Pyrrolidone carboxylic acid. A propeptide spanning residues 119–124 (YDYKYL) is cleaved from the precursor. A Pyrrolidone carboxylic acid modification is found at glutamine 125.

The protein belongs to the phospholipase A2 family. Group II subfamily. D49 sub-subfamily. Heterodimer of one of the acidic (CA1, CA2, CA3 or CA4) and one of the basic (CBa1, CBa2, CBb, CBc or CBd) subunits; non-covalently linked. The acidic subunit is non-toxic, without enzymatic activity and comprises 3 peptides that are cross-linked by 5 disulfide bridges. The basic subunit is toxic, has phospholipase A2 activity and is composed of a single chain. Multiple variants of each subunit give different crotoxin complexes that can be subdivided into 2 classes: (1) those of high toxicity, low PLA2 activity (CBb, CBc and CBd linked with high affinity to any CA) and high stability (K(d)=4.5 nM) and (2) those of moderate toxicity, high PLA2 activity (CBa2 linked with low affinity to any CA) and low stability (K(d)=25 nM). Expressed by the venom gland.

It is found in the secreted. Its function is as follows. CAalpha-CAbeta-CAgamma: The acidic subunit of crotoxin (CA) is a heterotrimer of three disulfide-linked chains generated by post-translational maturation of a PLA2-like precursor. CA has no PLA2 activity and is not neurotoxic by itself, but plays several important functions in the crotoxin complex by increasing the lethal potency of the uncomplexed CB subunit. It acts by physically occluding the hydrophobic interfacial binding surface (IBS) of CB. This effect decreases the adsorption of CB to phospholipid membranes, targeting the crotoxin complex to reach the specific presynaptic receptor (R48) at the neuromuscular junction. It also prevents the formation of the reactive CB dimer. Moreover, the CA subunit inhibits the catalytic activity by partially masking the catalytic site of CB and inhibits its anticoagulant activity. In terms of biological role, heterodimer CA-CB: Crotoxin is a potent presynaptic neurotoxin that possesses phospholipase A2 (PLA2) activity and exerts a lethal action by blocking neuromuscular transmission. It consists of a non-covalent association of a basic and weakly toxic PLA2 subunit (CBa2, CBb, CBc, or CBd), with a small acidic, non-enzymatic and non-toxic subunit (CA1, CA2, CA3 or CA4). The complex acts by binding to a specific 48-kDa protein (R48/CAPT) receptor located on presynaptic membranes, forming a transient ternary complex CA-CB-R48, followed by dissociation of the CA-CB complex and release of the CA subunit. At equilibrium, only the CB subunits remain associated with the specific crotoxin receptor. In addition to neurotoxicity, crotoxin has been found to exert myotoxicity, nephrotoxicity, and cardiovascular toxicity. Moreover, anti-inflammatory, immunomodulatory, anti-tumor and analgesic effects of crotoxin have also been reported. Functionally, found in the venom as a monomer and stabilized by one disulfide bond (Cys-131 and Cys-138). This peptide induces potent antinociceptive effects in acute and chronic pain models. This effect is mediated by the release of peripheral dynorphin A, an endogenous agonist of kappa-opioid receptors, and this release is dependent on cannabinoid receptor CB2 activation. This chain is Phospholipase A2 homolog crotoxin acid subunit CA, found in Crotalus durissus terrificus (South American rattlesnake).